The primary structure comprises 330 residues: Glycerol-3-phosphate dehydrogenase [NAD(P)+] (330 aa).

Trp-11, Arg-33, and Lys-105 together coordinate NADPH. Sn-glycerol 3-phosphate-binding residues include Lys-105, Gly-133, and Ser-135. Ala-137 provides a ligand contact to NADPH. The sn-glycerol 3-phosphate site is built by Lys-188, Asp-241, Ser-251, Arg-252, and Asn-253. Lys-188 functions as the Proton acceptor in the catalytic mechanism. Arg-252 serves as a coordination point for NADPH. NADPH contacts are provided by Val-276 and Glu-278.

Belongs to the NAD-dependent glycerol-3-phosphate dehydrogenase family.

The protein localises to the cytoplasm. It catalyses the reaction sn-glycerol 3-phosphate + NAD(+) = dihydroxyacetone phosphate + NADH + H(+). The enzyme catalyses sn-glycerol 3-phosphate + NADP(+) = dihydroxyacetone phosphate + NADPH + H(+). The protein operates within membrane lipid metabolism; glycerophospholipid metabolism. Its function is as follows. Catalyzes the reduction of the glycolytic intermediate dihydroxyacetone phosphate (DHAP) to sn-glycerol 3-phosphate (G3P), the key precursor for phospholipid synthesis. In Acidovorax ebreus (strain TPSY) (Diaphorobacter sp. (strain TPSY)), this protein is Glycerol-3-phosphate dehydrogenase [NAD(P)+].